Here is a 616-residue protein sequence, read N- to C-terminus: Chaperone protein HtpG (616 aa).

An a; substrate-binding region spans residues 1 to 333; that stretch reads MKKQFDTEVN…CQDLPLNVSR (333 aa). The tract at residues 334–542 is b; that stretch reads EILQQNKILS…SNDPTYQMQK (209 aa). Residues 543–616 are c; it reads IMLSMGQEVK…INEFLEKELL (74 aa).

It belongs to the heat shock protein 90 family. As to quaternary structure, homodimer.

It localises to the cytoplasm. In terms of biological role, molecular chaperone. Has ATPase activity. The protein is Chaperone protein HtpG of Borrelia garinii subsp. bavariensis (strain ATCC BAA-2496 / DSM 23469 / PBi) (Borreliella bavariensis).